The following is a 511-amino-acid chain: 2,3-bisphosphoglycerate-independent phosphoglycerate mutase (511 aa).

Mn(2+) contacts are provided by D12 and S62. S62 (phosphoserine intermediate) is an active-site residue. Substrate-binding positions include H123, 153-154 (RD), R185, R191, 260-263 (RPDR), and K335. Mn(2+)-binding residues include D402, H406, D443, H444, and H462.

It belongs to the BPG-independent phosphoglycerate mutase family. As to quaternary structure, monomer. Mn(2+) is required as a cofactor.

The catalysed reaction is (2R)-2-phosphoglycerate = (2R)-3-phosphoglycerate. Its pathway is carbohydrate degradation; glycolysis; pyruvate from D-glyceraldehyde 3-phosphate: step 3/5. In terms of biological role, catalyzes the interconversion of 2-phosphoglycerate and 3-phosphoglycerate. The sequence is that of 2,3-bisphosphoglycerate-independent phosphoglycerate mutase from Acetivibrio thermocellus (strain ATCC 27405 / DSM 1237 / JCM 9322 / NBRC 103400 / NCIMB 10682 / NRRL B-4536 / VPI 7372) (Clostridium thermocellum).